The chain runs to 280 residues: MFIIEIFISIIYGIIEGITEWLPISSTGHLILIQDFIQFKNQSPAFMEMFNVVIQLGAILAVVVIYFDKLNPFKPGKSARQVQKTWQLWAKVVVAALPAAVIGLFLDDWFEAHFYNLVSVSVMLIVYGAAFIYLERREHEEPAVTDLASLPYKTALQIGLFQILALFPGTSRSGATIVGGLLNGVSRSVVTEFTFYLGIPIMFGASGWKILKFIKNGNGLGFGQIFLLLVAMGVAFGVSLVVIRFLTDYVKKHDFTIFGKYRIGLGGVLLVYAAIKALMG.

8 helical membrane passes run phenylalanine 2 to leucine 22, alanine 45 to isoleucine 65, tryptophan 86 to leucine 106, phenylalanine 114 to leucine 134, leucine 147 to phenylalanine 167, serine 188 to tryptophan 208, glycine 223 to isoleucine 243, and phenylalanine 255 to isoleucine 275.

Belongs to the UppP family.

It localises to the cell membrane. It carries out the reaction di-trans,octa-cis-undecaprenyl diphosphate + H2O = di-trans,octa-cis-undecaprenyl phosphate + phosphate + H(+). Its function is as follows. Catalyzes the dephosphorylation of undecaprenyl diphosphate (UPP). Confers resistance to bacitracin. This chain is Undecaprenyl-diphosphatase, found in Streptococcus sanguinis (strain SK36).